The following is a 639-amino-acid chain: Methyl-accepting chemotaxis protein McpS (639 aa).

Residues 1–13 (MNSWFANISVNLK) lie on the Cytoplasmic side of the membrane. Residues 14-34 (LGLGFGLVLVLTGLLALTGWT) traverse the membrane as a helical segment. Topologically, residues 35-288 (SLGSLIDRSN…RDIESTQARS (254 aa)) are periplasmic. The 243-residue stretch at 41 to 283 (DRSNWMGDIG…IQLERRDIES (243 aa)) folds into the HBM domain. 60–65 (RIARLQ) is a binding site for (S)-malate. 60–65 (RIARLQ) contributes to the succinate binding site. Positions 138, 183, 187, and 236 each coordinate acetate. Residues 191–245 (AENSSANEQAALRQLDAALADTDNLKRQLPSEDARLQQFENAVLAYRDAVRQFRD) adopt a coiled-coil conformation. Positions 254 and 258 each coordinate (S)-malate. A succinate-binding site is contributed by Arg254. A helical transmembrane segment spans residues 289–309 (LQAIATLLALLVGVLAAVLIT). One can recognise an HAMP domain in the interval 310-362 (RQITRPLQDTLVAVEKIASGDLTQHMRVTRRDELGVLQQGIARMGTTLRELIS). The Cytoplasmic segment spans residues 310-639 (RQITRPLQDT…LQTLVSQFRV (330 aa)). Positions 367–603 (GVTQIASAAE…EISRSILNVR (237 aa)) constitute a Methyl-accepting transducer domain.

It belongs to the methyl-accepting chemotaxis (MCP) protein family. As to quaternary structure, homodimer. Exists as a mixture of monomers and dimers in solution. Ligand binding stabilizes the dimeric form. In terms of processing, methylated by CheR2.

The protein resides in the cell membrane. With respect to regulation, binding of citrate to the ligand-binding domain reduces the chemotaxis towards the strong attractants such as malate and succinate. However, in physiologically relevant niches, citrate is mostly complexed with magnesium or calcium ions, and does not bind McpS. In terms of biological role, chemotactic-signal transducers respond to changes in the concentration of attractants and repellents in the environment, transduce a signal from the outside to the inside of the cell, and facilitate sensory adaptation through the variation of the level of methylation. McpS is a specific chemoreceptor for 6 tricarboxylic acid (TCA) cycle intermediates (succinate, fumarate, malate, oxaloacetate, citrate and isocitrate), butyrate and acetate. Malate, succinate, fumarate and oxaloacetate cause the strongest chemotactic response. The polypeptide is Methyl-accepting chemotaxis protein McpS (mcpS) (Pseudomonas putida (strain ATCC 47054 / DSM 6125 / CFBP 8728 / NCIMB 11950 / KT2440)).